Reading from the N-terminus, the 552-residue chain is Cochlin (552 aa).

The signal sequence occupies residues 1–26 (MPSSRIPALCLGAWLLLLLLPRFARA). One can recognise an LCCL domain in the interval 30–123 (VPIPVTCFTR…QMLSRWSASF (94 aa)). 2 cysteine pairs are disulfide-bonded: cysteine 36/cysteine 52 and cysteine 56/cysteine 76. A glycan (N-linked (GlcNAc...) asparagine) is linked at asparagine 102. The disordered stretch occupies residues 129-161 (KSSTQEATGRAVSTAHPPSGKRLKKTPEKKTGN). VWFA domains follow at residues 167-352 (DIAF…VQKL) and 369-539 (NIAF…VSDV). N-linked (GlcNAc...) asparagine glycosylation is present at asparagine 223.

As to quaternary structure, monomer. May form homodimer. Interacts with type II collagen. Interacts with SLC44A2. Interacts with ANXA2. N-glycosylated. As to expression, expressed in inner ear structures.

The protein resides in the secreted. Its subcellular location is the extracellular space. In terms of biological role, plays a role in the control of cell shape and motility in the trabecular meshwork. The sequence is that of Cochlin (Coch) from Mus musculus (Mouse).